The primary structure comprises 675 residues: G-protein coupled receptor moody (675 aa).

Residues Met1–Ala44 lie on the Extracellular side of the membrane. Residues Val45–Leu65 form a helical membrane-spanning segment. The Cytoplasmic segment spans residues Leu66 to Asn73. The chain crosses the membrane as a helical span at residues Val74–Leu94. Topologically, residues Pro95–Leu115 are extracellular. Cysteines 113 and 192 form a disulfide. A helical transmembrane segment spans residues Ile116 to Ile136. Over Asn137–Trp156 the chain is Cytoplasmic. Residues Ile157–Leu177 traverse the membrane as a helical segment. Residues Gly178–Thr206 are Extracellular-facing. Residues Leu207 to Phe227 traverse the membrane as a helical segment. The Cytoplasmic segment spans residues Trp228–Lys327. A disordered region spans residues Thr258–Val316. A compositionally biased stretch (low complexity) spans Ser278–Pro294. The chain crosses the membrane as a helical span at residues Met328–Val348. The Extracellular portion of the chain corresponds to Ala349–His359. The helical transmembrane segment at Ile360–Met380 threads the bilayer. Topologically, residues Asn381 to Asp675 are cytoplasmic. Disordered regions lie at residues Ser475 to Ser568 and Leu588 to Asp675. Low complexity predominate over residues Ser536–Ser551. Over residues Ser552–Gly565 the composition is skewed to gly residues. Positions Leu666–Asp675 are enriched in basic and acidic residues.

The protein belongs to the G-protein coupled receptor 1 family.

The protein resides in the cell membrane. Required in glia to regulate the acute sensitivity to cocaine and to continuously maintain the proper blood-brain barrier (BBB) function. A moody-mediated signaling pathway functions in glia to regulate nervous system insulation and drug-related behaviors. The sequence is that of G-protein coupled receptor moody from Drosophila pseudoobscura pseudoobscura (Fruit fly).